Consider the following 460-residue polypeptide: Muscarinic acetylcholine receptor M1 (460 aa).

Residues 1-22 (MNTSAPPAVSPNITVLAPGKGP) lie on the Extracellular side of the membrane. N2 and N12 each carry an N-linked (GlcNAc...) asparagine glycan. Residues 23-48 (WQVAFIGITTGLLSLATVTGNLLVLI) form a helical membrane-spanning segment. The Cytoplasmic portion of the chain corresponds to 49-62 (SFKVNTELKTVNNY). Residues 63-84 (FLLSLACADLIIGTFSMNLYTT) form a helical membrane-spanning segment. The Extracellular portion of the chain corresponds to 85–95 (YLLMGHWALGT). The helical transmembrane segment at 96-121 (LACDLWLALDYVASNASVMNLLLISF) threads the bilayer. An intrachain disulfide couples C98 to C178. Residues 122–142 (DRYFSVTRPLSYRAKRTPRRA) are Cytoplasmic-facing. Residues 143–164 (ALMIGLAWLVSFVLWAPAILFW) form a helical membrane-spanning segment. At 165–185 (QYLVGERTVLAGQCYIQFLSQ) the chain is on the extracellular side. Residues 186–209 (PIITFGTAMAAFYLPVTVMCTLYW) traverse the membrane as a helical segment. The Cytoplasmic portion of the chain corresponds to 210–366 (RIYRETENRA…LVKEKKAART (157 aa)). Disordered regions lie at residues 225–256 (LQGS…ETPP), 274–297 (WKEE…EEPG), and 310–351 (EAQA…QLAK). Phosphothreonine is present on T230. Residues 238 to 247 (SSSSERSQPG) show a composition bias toward low complexity. The span at 328–343 (RPTKKGRDRAGKGQKP) shows a compositional bias: basic residues. The chain crosses the membrane as a helical span at residues 367–390 (LSAILLAFILTWTPYNIMVLVSTF). The Extracellular portion of the chain corresponds to 391-397 (CKDCVPE). Residues 398–420 (TLWELGYWLCYVNSTINPMCYAL) form a helical membrane-spanning segment. Residues 421-460 (CNKAFRDTFRLLLLCRWDKRRWRKIPKRPGSVHRTPSRQC) are Cytoplasmic-facing. The residue at position 428 (T428) is a Phosphothreonine. S451 is modified (phosphoserine). T455 bears the Phosphothreonine mark. At S457 the chain carries Phosphoserine.

The protein belongs to the G-protein coupled receptor 1 family. Muscarinic acetylcholine receptor subfamily. CHRM1 sub-subfamily. In terms of assembly, interacts with GPRASP2. Interacts with TMEM147.

The protein resides in the cell membrane. It localises to the postsynaptic cell membrane. In terms of biological role, the muscarinic acetylcholine receptor mediates various cellular responses, including inhibition of adenylate cyclase, breakdown of phosphoinositides and modulation of potassium channels through the action of G proteins. Primary transducing effect is Pi turnover. This chain is Muscarinic acetylcholine receptor M1 (CHRM1), found in Homo sapiens (Human).